A 298-amino-acid chain; its full sequence is Lipoyl synthase (298 aa).

[4Fe-4S] cluster-binding residues include Cys40, Cys45, Cys51, Cys67, Cys71, Cys74, and Ser280. One can recognise a Radical SAM core domain in the interval Ala53–Ser269.

The protein belongs to the radical SAM superfamily. Lipoyl synthase family. [4Fe-4S] cluster serves as cofactor.

The protein resides in the cytoplasm. The enzyme catalyses [[Fe-S] cluster scaffold protein carrying a second [4Fe-4S](2+) cluster] + N(6)-octanoyl-L-lysyl-[protein] + 2 oxidized [2Fe-2S]-[ferredoxin] + 2 S-adenosyl-L-methionine + 4 H(+) = [[Fe-S] cluster scaffold protein] + N(6)-[(R)-dihydrolipoyl]-L-lysyl-[protein] + 4 Fe(3+) + 2 hydrogen sulfide + 2 5'-deoxyadenosine + 2 L-methionine + 2 reduced [2Fe-2S]-[ferredoxin]. The protein operates within protein modification; protein lipoylation via endogenous pathway; protein N(6)-(lipoyl)lysine from octanoyl-[acyl-carrier-protein]. In terms of biological role, catalyzes the radical-mediated insertion of two sulfur atoms into the C-6 and C-8 positions of the octanoyl moiety bound to the lipoyl domains of lipoate-dependent enzymes, thereby converting the octanoylated domains into lipoylated derivatives. This Bacillus cytotoxicus (strain DSM 22905 / CIP 110041 / 391-98 / NVH 391-98) protein is Lipoyl synthase.